Here is an 870-residue protein sequence, read N- to C-terminus: DNA mismatch repair protein MutS (870 aa).

An ATP-binding site is contributed by 608–615 (GPNMAGKS).

Belongs to the DNA mismatch repair MutS family.

This protein is involved in the repair of mismatches in DNA. It is possible that it carries out the mismatch recognition step. This protein has a weak ATPase activity. This Persephonella marina (strain DSM 14350 / EX-H1) protein is DNA mismatch repair protein MutS.